A 137-amino-acid chain; its full sequence is ATP synthase epsilon chain, chloroplastic (137 aa).

This sequence belongs to the ATPase epsilon chain family. F-type ATPases have 2 components, CF(1) - the catalytic core - and CF(0) - the membrane proton channel. CF(1) has five subunits: alpha(3), beta(3), gamma(1), delta(1), epsilon(1). CF(0) has three main subunits: a, b and c.

It localises to the plastid. Its subcellular location is the chloroplast thylakoid membrane. Functionally, produces ATP from ADP in the presence of a proton gradient across the membrane. This is ATP synthase epsilon chain, chloroplastic from Pisum sativum (Garden pea).